We begin with the raw amino-acid sequence, 534 residues long: High affinity cGMP-specific 3',5'-cyclic phosphodiesterase 9A (534 aa).

Residues 175–496 (PRRDVPTYPK…EHYEELKQLD (322 aa)) enclose the PDEase domain. Histidine 251 serves as the catalytic Proton donor. 251-255 (HNFRH) provides a ligand contact to 3',5'-cyclic GMP. Zn(2+) contacts are provided by histidine 255, histidine 291, and aspartate 292. Aspartate 292 provides a ligand contact to 3',5'-cyclic GMP. Residue aspartate 292 participates in Mg(2+) binding. Serine 318 bears the Phosphoserine mark. Residues aspartate 401, tyrosine 423, and 451 to 452 (AQ) contribute to the 3',5'-cyclic GMP site. Position 401 (aspartate 401) interacts with Zn(2+). Residues 500-534 (KELQKKTESLTSGAPENTTEKNRDAKDSEGHSPPN) form a disordered region. A compositionally biased stretch (basic and acidic residues) spans 517-534 (TTEKNRDAKDSEGHSPPN).

Belongs to the cyclic nucleotide phosphodiesterase family. PDE9 subfamily. In terms of assembly, homodimer. It depends on Zn(2+) as a cofactor. Mg(2+) serves as cofactor. Highly expressed in kidney. Lower levels in liver, lung and brain. Widely expressed in brain, with highest expression in cerebellar Purkinje cells. Present in heart (at protein level).

It localises to the cell projection. The protein resides in the ruffle membrane. Its subcellular location is the cytoplasm. It is found in the perinuclear region. The protein localises to the golgi apparatus. It localises to the endoplasmic reticulum. The protein resides in the cell membrane. Its subcellular location is the sarcolemma. It carries out the reaction 3',5'-cyclic GMP + H2O = GMP + H(+). The protein operates within purine metabolism; 3',5'-cyclic GMP degradation; GMP from 3',5'-cyclic GMP: step 1/1. Its activity is regulated as follows. Inhibited by SCH 51866 and moderately, by zaprinast. Specifically inhibited by PF-04447943 (6-[(3S,4S)-4-methyl-1-(pyrimidin-2-ylmethyl)pyrrolidin-3-yl]-1-(tetrahydro-2H-pyran-4-yl)-1,5-dihydro-4H-pyrazolo[3,4-d]pyrimidin-4-one). Specifically hydrolyzes the second messenger cGMP, which is a key regulator of many important physiological processes. Highly specific: compared to other members of the cyclic nucleotide phosphodiesterase family, has the highest affinity and selectivity for cGMP. Specifically regulates natriuretic-peptide-dependent cGMP signaling in heart, acting as a regulator of cardiac hypertrophy in myocytes and muscle. Does not regulate nitric oxide-dependent cGMP in heart. Additional experiments are required to confirm whether its ability to hydrolyze natriuretic-peptide-dependent cGMP is specific to heart or is a general feature of the protein. In brain, involved in cognitive function, such as learning and long-term memory. The polypeptide is High affinity cGMP-specific 3',5'-cyclic phosphodiesterase 9A (Pde9a) (Mus musculus (Mouse)).